Consider the following 1143-residue polypeptide: DNA polymerase III subunit alpha (1143 aa).

Belongs to the DNA polymerase type-C family. DnaE subfamily. As to quaternary structure, DNA polymerase III contains a core (composed of alpha, epsilon and theta chains) that associates with a tau subunit. This core dimerizes to form the PolIII' complex. PolIII' associates with the gamma complex (composed of gamma, delta, delta', psi and chi chains) and with the beta chain to form the complete DNA polymerase III complex.

It is found in the cytoplasm. The enzyme catalyses DNA(n) + a 2'-deoxyribonucleoside 5'-triphosphate = DNA(n+1) + diphosphate. Its function is as follows. DNA polymerase III is a complex, multichain enzyme responsible for most of the replicative synthesis in bacteria. This DNA polymerase also exhibits 3' to 5' exonuclease activity. The alpha chain is the DNA polymerase. The polypeptide is DNA polymerase III subunit alpha (dnaE1) (Caulobacter vibrioides (strain NA1000 / CB15N) (Caulobacter crescentus)).